We begin with the raw amino-acid sequence, 355 residues long: Ribosomal RNA large subunit methyltransferase M (355 aa).

S-adenosyl-L-methionine is bound by residues serine 191, 224-227 (APGG), aspartate 243, aspartate 263, and aspartate 279. The active-site Proton acceptor is the lysine 308.

This sequence belongs to the class I-like SAM-binding methyltransferase superfamily. RNA methyltransferase RlmE family. RlmM subfamily. In terms of assembly, monomer.

It localises to the cytoplasm. It catalyses the reaction cytidine(2498) in 23S rRNA + S-adenosyl-L-methionine = 2'-O-methylcytidine(2498) in 23S rRNA + S-adenosyl-L-homocysteine + H(+). Catalyzes the 2'-O-methylation at nucleotide C2498 in 23S rRNA. This Stenotrophomonas maltophilia (strain K279a) protein is Ribosomal RNA large subunit methyltransferase M.